A 295-amino-acid chain; its full sequence is ATP synthase gamma chain (295 aa).

Belongs to the ATPase gamma chain family. In terms of assembly, F-type ATPases have 2 components, CF(1) - the catalytic core - and CF(0) - the membrane proton channel. CF(1) has five subunits: alpha(3), beta(3), gamma(1), delta(1), epsilon(1). CF(0) has three main subunits: a, b and c.

It is found in the cell inner membrane. Its function is as follows. Produces ATP from ADP in the presence of a proton gradient across the membrane. The gamma chain is believed to be important in regulating ATPase activity and the flow of protons through the CF(0) complex. In Campylobacter concisus (strain 13826), this protein is ATP synthase gamma chain.